The chain runs to 294 residues: MAVQKYTVALFLAMALVAGPAASYAADAGTPPTPATPAVPGAAAGKATTHEQKLIEDINAAFKWWPASAPPADKYKTFETAFSKANIAGASTKGLDAAYSVVYNTAAGATPEAKYDSFVTALTEALRIMAGTLEVHAVKPATEEEVPSAKILRANSRSSTRSSRFKIAATVATPLSHSTAANSAPANDKFTVFEGAFNKAIKERHGGPTETYKFIPSLEAAVKQAYGATVARAPEVKYAVFEAGLTKAITAMSEAQKVAKPVRLSPQPPQVLPLAAGGAATVAAASDSRGGYKV.

Positions 1-25 (MAVQKYTVALFLAMALVAGPAASYA) are cleaved as a signal peptide.

The protein belongs to the Poa p IX/Phl p VI allergen family.

The polypeptide is Major pollen allergen Pha a 5.3 (Phalaris aquatica (Canary grass)).